The primary structure comprises 278 residues: HTH-type transcriptional activator RhaS (278 aa).

Residues 174 to 272 (NQLMAWLEDH…NWSPRDIRQG (99 aa)) enclose the HTH araC/xylS-type domain. 2 DNA-binding regions (H-T-H motif) span residues 191–212 (EAVAEQFSLSLRTLHRQLKQHT) and 239–262 (VTEIAYRCGFGDSNHFSTLFRREF).

As to quaternary structure, binds DNA as a dimer.

The protein localises to the cytoplasm. Activates expression of the rhaBAD and rhaT operons. This is HTH-type transcriptional activator RhaS from Salmonella agona (strain SL483).